Reading from the N-terminus, the 445-residue chain is Signal recognition particle 54 kDa protein (445 aa).

GTP is bound by residues 106-113, 186-190, and 244-247; these read GLQGSGKT, DTAGR, and TKLD.

This sequence belongs to the GTP-binding SRP family. SRP54 subfamily. In terms of assembly, part of the signal recognition particle protein translocation system, which is composed of SRP and FtsY. Archaeal SRP consists of a 7S RNA molecule of 300 nucleotides and two protein subunits: SRP54 and SRP19.

It is found in the cytoplasm. The enzyme catalyses GTP + H2O = GDP + phosphate + H(+). Functionally, involved in targeting and insertion of nascent membrane proteins into the cytoplasmic membrane. Binds to the hydrophobic signal sequence of the ribosome-nascent chain (RNC) as it emerges from the ribosomes. The SRP-RNC complex is then targeted to the cytoplasmic membrane where it interacts with the SRP receptor FtsY. This chain is Signal recognition particle 54 kDa protein, found in Methanobrevibacter smithii (strain ATCC 35061 / DSM 861 / OCM 144 / PS).